Consider the following 313-residue polypeptide: Putative S-adenosyl-L-methionine-dependent methyltransferase MUL_0706 (313 aa).

S-adenosyl-L-methionine contacts are provided by residues Asp132 and 161-162 (DL).

It belongs to the UPF0677 family.

Functionally, exhibits S-adenosyl-L-methionine-dependent methyltransferase activity. The polypeptide is Putative S-adenosyl-L-methionine-dependent methyltransferase MUL_0706 (Mycobacterium ulcerans (strain Agy99)).